A 306-amino-acid polypeptide reads, in one-letter code: D-alanine--D-alanine ligase (306 aa).

Residues 101-303 (KLLWQGAGLP…FSQLVVRILE (203 aa)) form the ATP-grasp domain. 134–189 (ISALGLPLIVKPSREGSSVGMTKVVEENALQGALSLAFQHDDEILIEKWLCGPEFT) contributes to the ATP binding site. Residues aspartate 257, glutamate 270, and asparagine 272 each coordinate Mg(2+).

It belongs to the D-alanine--D-alanine ligase family. The cofactor is Mg(2+). Mn(2+) serves as cofactor.

It localises to the cytoplasm. The catalysed reaction is 2 D-alanine + ATP = D-alanyl-D-alanine + ADP + phosphate + H(+). The protein operates within cell wall biogenesis; peptidoglycan biosynthesis. In terms of biological role, cell wall formation. This is D-alanine--D-alanine ligase from Salmonella paratyphi A (strain ATCC 9150 / SARB42).